The sequence spans 170 residues: Large ribosomal subunit protein uL10 (170 aa).

The protein belongs to the universal ribosomal protein uL10 family. In terms of assembly, part of the ribosomal stalk of the 50S ribosomal subunit. The N-terminus interacts with L11 and the large rRNA to form the base of the stalk. The C-terminus forms an elongated spine to which L12 dimers bind in a sequential fashion forming a multimeric L10(L12)X complex.

Forms part of the ribosomal stalk, playing a central role in the interaction of the ribosome with GTP-bound translation factors. The chain is Large ribosomal subunit protein uL10 from Corynebacterium urealyticum (strain ATCC 43042 / DSM 7109).